The primary structure comprises 540 residues: Keratin, type II cytoskeletal 73 (540 aa).

The tract at residues 1–131 (MSRQFTYKSG…DPEIQKVRAQ (131 aa)) is head. The tract at residues 132–167 (EREQIKVLNNKFASFIDKVRFLEQQNQVLETKWELL) is coil 1A. The 314-residue stretch at 132 to 445 (EREQIKVLNN…KLLEGEECRM (314 aa)) folds into the IF rod domain. Residues 168–186 (QQLDLNNCKNNLEPILEGY) form a linker 1 region. Residues 187–278 (ISNLRKQLET…CLYEGETAQI (92 aa)) are coil 1B. Residues 279–302 (QSHISDTSIILSMDNNRNLDLDSI) are linker 12. The segment at 303 to 441 (IAEVRAQYEE…ATYRKLLEGE (139 aa)) is coil 2. Residues 442–540 (ECRMSGEYTN…LSSPTKKTMR (99 aa)) are tail. Residues 502–540 (SGNCSPRGEARTRLGSASEFRDSQGKTLALSSPTKKTMR) are disordered. Residues 526–540 (GKTLALSSPTKKTMR) show a composition bias toward polar residues.

This sequence belongs to the intermediate filament family. In terms of assembly, heterotetramer of two type I and two type II keratins. Highly expressed in hair follicles from scalp. In hair, it is specifically present in the inner root sheath (IRS) of the hair follicle. Present in the IRS cuticle, but not in Henle or Huxley layers of the IRS. In the IRS cuticle, it is expressed between the lowermost bulb region of the cuticle and the region where Henle cells undergo abrupt terminal differentiation. Detected up to the uppermost cortex region where cuticle cells terminally differentiate (at protein level).

Its function is as follows. Has a role in hair formation. Specific component of keratin intermediate filaments in the inner root sheath (IRS) of the hair follicle. The sequence is that of Keratin, type II cytoskeletal 73 (KRT73) from Homo sapiens (Human).